The sequence spans 129 residues: Allergen Bra j 1-E (129 aa).

The disordered stretch occupies residues 28 to 47; it reads KQAMQSGSGPQPQGPQQRPP. Residues 32–47 are compositionally biased toward low complexity; that stretch reads QSGSGPQPQGPQQRPP.

The protein belongs to the 2S seed storage albumins family. As to quaternary structure, the mature protein consists of a small and a large chain linked by two disulfide bonds.

In terms of biological role, this is a 2S seed storage protein. The sequence is that of Allergen Bra j 1-E from Brassica juncea (Indian mustard).